A 371-amino-acid chain; its full sequence is dTDP-4-amino-4,6-dideoxy-D-glucose transaminase (371 aa).

Lysine 186 bears the N6-(pyridoxal phosphate)lysine mark.

This sequence belongs to the DegT/DnrJ/EryC1 family. Requires pyridoxal 5'-phosphate as cofactor.

The enzyme catalyses dTDP-4-amino-4,6-dideoxy-D-glucose + 2-oxoglutarate = dTDP-4-dehydro-6-deoxy-alpha-D-glucose + L-glutamate. Its pathway is bacterial outer membrane biogenesis; lipopolysaccharide biosynthesis. Catalyzes the conversion of dTDP-4-dehydro-6-deoxy-D-glucose (dTDP-D-Glc4O) to dTDP-4-amino-4,6-dideoxy-D-glucose (dTDP-D-Qui4N). The protein is dTDP-4-amino-4,6-dideoxy-D-glucose transaminase (vioA) of Escherichia coli.